A 472-amino-acid chain; its full sequence is ATP-dependent protease ATPase subunit HslU (472 aa).

Residues Ile20, 62 to 67, Asp285, Glu350, and Arg422 contribute to the ATP site; that span reads GVGKTE.

This sequence belongs to the ClpX chaperone family. HslU subfamily. In terms of assembly, a double ring-shaped homohexamer of HslV is capped on each side by a ring-shaped HslU homohexamer. The assembly of the HslU/HslV complex is dependent on binding of ATP.

Its subcellular location is the cytoplasm. Functionally, ATPase subunit of a proteasome-like degradation complex; this subunit has chaperone activity. The binding of ATP and its subsequent hydrolysis by HslU are essential for unfolding of protein substrates subsequently hydrolyzed by HslV. HslU recognizes the N-terminal part of its protein substrates and unfolds these before they are guided to HslV for hydrolysis. The protein is ATP-dependent protease ATPase subunit HslU of Lactiplantibacillus plantarum (strain ATCC BAA-793 / NCIMB 8826 / WCFS1) (Lactobacillus plantarum).